The chain runs to 322 residues: Ethylmalonyl-CoA decarboxylase (322 aa).

Residue Lys-232 is modified to N6-acetyllysine; alternate. An N6-succinyllysine; alternate modification is found at Lys-232. The residue at position 316 (Lys-316) is an N6-succinyllysine.

The protein belongs to the enoyl-CoA hydratase/isomerase family.

It localises to the cytoplasm. The protein resides in the cytosol. It catalyses the reaction (2S)-ethylmalonyl-CoA + H(+) = butanoyl-CoA + CO2. It carries out the reaction (S)-methylmalonyl-CoA + H(+) = propanoyl-CoA + CO2. The enzyme catalyses (2R)-ethylmalonyl-CoA + H(+) = butanoyl-CoA + CO2. Decarboxylates ethylmalonyl-CoA, a potentially toxic metabolite, to form butyryl-CoA, suggesting it might be involved in metabolite proofreading. Acts preferentially on (S)-ethylmalonyl-CoA but also has some activity on the (R)-isomer. Also has methylmalonyl-CoA decarboxylase activity at lower level. In Mus musculus (Mouse), this protein is Ethylmalonyl-CoA decarboxylase (Echdc1).